Reading from the N-terminus, the 64-residue chain is NSAHPCCDPVTCKPKRGEHCISGPCCRNCKFLSPGTICKKARGDDMNDYCTGISSDCPRNPWKD.

The Disintegrin domain maps to 1–64; sequence NSAHPCCDPV…SDCPRNPWKD (64 aa). Intrachain disulfides connect C6/C29, C20/C26, C25/C50, and C38/C57. Residues 42–44 carry the Cell attachment site motif; the sequence is RGD.

Belongs to the disintegrin family. Dimeric disintegrin subfamily. In terms of assembly, heterodimer with subunit alpha; disulfide-linked. In terms of tissue distribution, expressed by the venom gland.

Its subcellular location is the secreted. Its function is as follows. Inhibits ADP-induced human platelet aggregation. Antagonist of alpha-IIb/beta-3 (ITGA2B/ITGB3). The sequence is that of Disintegrin CV-11-beta from Cerastes vipera (Sahara sand viper).